We begin with the raw amino-acid sequence, 232 residues long: Large ribosomal subunit protein uL1 (232 aa).

Belongs to the universal ribosomal protein uL1 family. In terms of assembly, part of the 50S ribosomal subunit.

Binds directly to 23S rRNA. The L1 stalk is quite mobile in the ribosome, and is involved in E site tRNA release. Its function is as follows. Protein L1 is also a translational repressor protein, it controls the translation of the L11 operon by binding to its mRNA. The protein is Large ribosomal subunit protein uL1 of Variovorax paradoxus (strain S110).